The chain runs to 254 residues: MRILVTNDDGIHAPGLETLEGIARALSDDVWVVAPETDQSGVSHSLSLNDPLRLRQIGEKRFAVKGTPSDCIIMGVAHILKDHKPDLVLSGVNRGQNVAEDVTYSGTIAGAMEGTILGIRSIALSQAYGAGGRANLKWACAATHGPRVIEKILEIGIEPGILVNVNFPDCEPEDVQGVAVSAQGQRNQALLQIDARHDGRGNPYFWLAFAKARFEPGNGTDLKAIAENRISVTPLRLDLTDEPELTRFAAAFRA.

A divalent metal cation is bound by residues aspartate 8, aspartate 9, serine 40, and asparagine 93.

The protein belongs to the SurE nucleotidase family. A divalent metal cation is required as a cofactor.

The protein resides in the cytoplasm. It carries out the reaction a ribonucleoside 5'-phosphate + H2O = a ribonucleoside + phosphate. Nucleotidase that shows phosphatase activity on nucleoside 5'-monophosphates. This is 5'-nucleotidase SurE from Methylorubrum extorquens (strain CM4 / NCIMB 13688) (Methylobacterium extorquens).